The sequence spans 210 residues: Putative odorant-binding protein A5 (210 aa).

An N-terminal signal peptide occupies residues 1–19 (MKLPALHLLFLGFICLARS).

It belongs to the phosphatidylethanolamine-binding protein family. Cells at the bases of a few scattered sensilla on the posterior surface of the antenna.

It is found in the secreted. This chain is Putative odorant-binding protein A5 (a5), found in Drosophila melanogaster (Fruit fly).